The chain runs to 105 residues: Guanidinium exporter (105 aa).

The chain crosses the membrane as a helical span at residues 1 to 21 (MSWIILLIAGLLEVVWAVGLK). Over 22 to 28 (YTHGFSR) the chain is Cytoplasmic. Residues 29-49 (LTPSIITITAMVISMALLSWA) traverse the membrane as a helical segment. Topologically, residues 50–57 (MKTLPVGT) are periplasmic. The chain crosses the membrane as a helical span at residues 58–78 (AYAIWTGIGAVGAAITGILLL). At 79 to 81 (GES) the chain is on the cytoplasmic side. The helical transmembrane segment at 82–102 (ASPARLLSLGLIVAGIIGLKL) threads the bilayer. Over 103 to 105 (SAH) the chain is Periplasmic.

It belongs to the drug/metabolite transporter (DMT) superfamily. Small multidrug resistance (SMR) (TC 2.A.7.1) family. Gdx/SugE subfamily.

Its subcellular location is the cell inner membrane. In terms of biological role, guanidinium ion exporter. Couples guanidinium export to the proton motive force, exchanging one guanidinium ion for two protons. In Salmonella typhi, this protein is Guanidinium exporter.